Consider the following 44-residue polypeptide: Photosystem I reaction center subunit IX (44 aa).

A helical membrane pass occupies residues 7–27 (YLSTAPVLAILCVSFLAALLI).

Belongs to the PsaJ family.

It is found in the plastid. Its subcellular location is the chloroplast thylakoid membrane. May help in the organization of the PsaE and PsaF subunits. The protein is Photosystem I reaction center subunit IX of Pinus thunbergii (Japanese black pine).